The primary structure comprises 132 residues: L-ectoine synthase (132 aa).

The protein belongs to the ectoine synthase family.

It carries out the reaction (2S)-4-acetamido-2-aminobutanoate = L-ectoine + H2O. Its pathway is amine and polyamine biosynthesis; ectoine biosynthesis; L-ectoine from L-aspartate 4-semialdehyde: step 3/3. Catalyzes the circularization of gamma-N-acetyl-alpha,gamma-diaminobutyric acid (ADABA) to ectoine (1,4,5,6-tetrahydro-2-methyl-4-pyrimidine carboxylic acid), which is an excellent osmoprotectant. The chain is L-ectoine synthase from Saccharophagus degradans (strain 2-40 / ATCC 43961 / DSM 17024).